Here is a 158-residue protein sequence, read N- to C-terminus: C-type lectin BML-2 (158 aa).

Positions 1-23 are cleaved as a signal peptide; the sequence is MGHFTFTGLCLLAMFLSLRGAEC. 4 disulfides stabilise this stretch: C26-C37, C54-C154, C61-C156, and C129-C146. A C-type lectin domain is found at 33-155; the sequence is KNGLCYKVFS…CESLHPFLCQ (123 aa). A Mannose-binding motif is present at residues 119–121; that stretch reads EPN. N121 carries an N-linked (GlcNAc...) asparagine glycan. Residues E127, N142, and D143 each contribute to the Ca(2+) site.

It belongs to the true venom lectin family. Dimer. Probably non-covalently linked. Expressed by the venom gland.

The protein localises to the secreted. Functionally, recombinant C-type lectin BML-2 is able to agglutinate erythrocytes. May be a calcium-dependent lectin. The protein is C-type lectin BML-2 of Bungarus multicinctus (Many-banded krait).